We begin with the raw amino-acid sequence, 299 residues long: Large ribosomal subunit protein eL22 (299 aa).

2 disordered regions span residues 1–142 and 155–178; these read MAPT…AAPA and VAKP…KKNV. 2 stretches are compositionally biased toward basic and acidic residues: residues 33–42 and 55–64; these read GKVEKPKAEA and KASEAAKDVK. Composition is skewed to low complexity over residues 65-98 and 105-142; these read AAAA…AAAA and AAAA…AAPA.

The protein belongs to the eukaryotic ribosomal protein eL22 family.

The protein is Large ribosomal subunit protein eL22 (RpL22) of Drosophila melanogaster (Fruit fly).